Here is a 339-residue protein sequence, read N- to C-terminus: tRNA-specific 2-thiouridylase MnmA (339 aa).

ATP-binding positions include 8 to 15 (AMSGGVDS) and M34. Catalysis depends on C94, which acts as the Nucleophile. A disulfide bond links C94 and C188. ATP is bound at residue G118. The interaction with tRNA stretch occupies residues 136–138 (KDQ). C188 (cysteine persulfide intermediate) is an active-site residue. The tract at residues 290-291 (RY) is interaction with tRNA.

This sequence belongs to the MnmA/TRMU family.

The protein resides in the cytoplasm. It catalyses the reaction S-sulfanyl-L-cysteinyl-[protein] + uridine(34) in tRNA + AH2 + ATP = 2-thiouridine(34) in tRNA + L-cysteinyl-[protein] + A + AMP + diphosphate + H(+). In terms of biological role, catalyzes the 2-thiolation of uridine at the wobble position (U34) of tRNA, leading to the formation of s(2)U34. This Nitratiruptor sp. (strain SB155-2) protein is tRNA-specific 2-thiouridylase MnmA.